The primary structure comprises 271 residues: Calretinin (271 aa).

EF-hand domains follow at residues 16–51 (LTAS…LEKA), 63–98 (NFGE…EENF), 107–142 (GSSA…LLKK), 151–186 (KLQE…QENF), 195–230 (LTSE…LYEK), and 235–270 (MNIQ…SEPP). Positions 29, 31, 33, 35, 40, 76, 78, 80, 82, 87, 120, 122, 124, 126, 131, 164, 166, 168, 170, 175, 208, 210, 212, 214, and 219 each coordinate Ca(2+). Y214 is subject to Phosphotyrosine.

This sequence belongs to the calbindin family. Brain.

It is found in the synapse. The protein localises to the cell projection. The protein resides in the dendrite. In terms of biological role, calcium-binding protein involved in calcium homeostasis and signal transduction. It plays a critical role in buffering intracellular calcium levels and modulating calcium-dependent signaling pathways. Predominantly expressed in specific neuronal populations, influences synaptic plasticity and neuronal excitability, contributing to learning and memory. During embryonic development, it facilitates neuronal differentiation and maturation. This is Calretinin from Homo sapiens (Human).